A 371-amino-acid chain; its full sequence is Queuine tRNA-ribosyltransferase (371 aa).

Aspartate 89 acts as the Proton acceptor in catalysis. Substrate-binding positions include aspartate 89–phenylalanine 93, aspartate 143, glutamine 185, and glycine 212. The RNA binding stretch occupies residues glycine 243–aspartate 249. Aspartate 262 (nucleophile) is an active-site residue. Positions threonine 267–arginine 271 are RNA binding; important for wobble base 34 recognition. Zn(2+)-binding residues include cysteine 300, cysteine 302, cysteine 305, and histidine 331.

It belongs to the queuine tRNA-ribosyltransferase family. In terms of assembly, homodimer. Within each dimer, one monomer is responsible for RNA recognition and catalysis, while the other monomer binds to the replacement base PreQ1. It depends on Zn(2+) as a cofactor.

The enzyme catalyses 7-aminomethyl-7-carbaguanine + guanosine(34) in tRNA = 7-aminomethyl-7-carbaguanosine(34) in tRNA + guanine. The protein operates within tRNA modification; tRNA-queuosine biosynthesis. Catalyzes the base-exchange of a guanine (G) residue with the queuine precursor 7-aminomethyl-7-deazaguanine (PreQ1) at position 34 (anticodon wobble position) in tRNAs with GU(N) anticodons (tRNA-Asp, -Asn, -His and -Tyr). Catalysis occurs through a double-displacement mechanism. The nucleophile active site attacks the C1' of nucleotide 34 to detach the guanine base from the RNA, forming a covalent enzyme-RNA intermediate. The proton acceptor active site deprotonates the incoming PreQ1, allowing a nucleophilic attack on the C1' of the ribose to form the product. After dissociation, two additional enzymatic reactions on the tRNA convert PreQ1 to queuine (Q), resulting in the hypermodified nucleoside queuosine (7-(((4,5-cis-dihydroxy-2-cyclopenten-1-yl)amino)methyl)-7-deazaguanosine). The chain is Queuine tRNA-ribosyltransferase from Thioalkalivibrio sulfidiphilus (strain HL-EbGR7).